The sequence spans 129 residues: Cytochrome c oxidase subunit 5B, mitochondrial (129 aa).

Residues 1–31 (MASRLLRGAGALAAQALRARGPSGAAAVRSM) constitute a mitochondrion transit peptide. Residues lysine 68 and lysine 86 each carry the N6-acetyllysine modification. Zn(2+) is bound by residues cysteine 91, cysteine 93, cysteine 113, and cysteine 116. Position 121 is an N6-acetyllysine (lysine 121).

Belongs to the cytochrome c oxidase subunit 5B family. Component of the cytochrome c oxidase (complex IV, CIV), a multisubunit enzyme composed of 14 subunits. The complex is composed of a catalytic core of 3 subunits MT-CO1, MT-CO2 and MT-CO3, encoded in the mitochondrial DNA, and 11 supernumerary subunits COX4I, COX5A, COX5B, COX6A, COX6B, COX6C, COX7A, COX7B, COX7C, COX8 and NDUFA4, which are encoded in the nuclear genome. The complex exists as a monomer or a dimer and forms supercomplexes (SCs) in the inner mitochondrial membrane with NADH-ubiquinone oxidoreductase (complex I, CI) and ubiquinol-cytochrome c oxidoreductase (cytochrome b-c1 complex, complex III, CIII), resulting in different assemblies (supercomplex SCI(1)III(2)IV(1) and megacomplex MCI(2)III(2)IV(2)).

It is found in the mitochondrion inner membrane. Its pathway is energy metabolism; oxidative phosphorylation. Its function is as follows. Component of the cytochrome c oxidase, the last enzyme in the mitochondrial electron transport chain which drives oxidative phosphorylation. The respiratory chain contains 3 multisubunit complexes succinate dehydrogenase (complex II, CII), ubiquinol-cytochrome c oxidoreductase (cytochrome b-c1 complex, complex III, CIII) and cytochrome c oxidase (complex IV, CIV), that cooperate to transfer electrons derived from NADH and succinate to molecular oxygen, creating an electrochemical gradient over the inner membrane that drives transmembrane transport and the ATP synthase. Cytochrome c oxidase is the component of the respiratory chain that catalyzes the reduction of oxygen to water. Electrons originating from reduced cytochrome c in the intermembrane space (IMS) are transferred via the dinuclear copper A center (CU(A)) of subunit 2 and heme A of subunit 1 to the active site in subunit 1, a binuclear center (BNC) formed by heme A3 and copper B (CU(B)). The BNC reduces molecular oxygen to 2 water molecules using 4 electrons from cytochrome c in the IMS and 4 protons from the mitochondrial matrix. This chain is Cytochrome c oxidase subunit 5B, mitochondrial (COX5B), found in Pongo abelii (Sumatran orangutan).